A 530-amino-acid polypeptide reads, in one-letter code: uncharacterized protein (530 aa).

The segment at 362–408 is disordered; it reads NLTPKLNKTNEDIKSDSTSQPQGFPEGNRRVMENPETKVSKTDDEEM. Basic and acidic residues predominate over residues 388–403; that stretch reads GNRRVMENPETKVSKT.

Belongs to the IIV-6 030L family.

This is an uncharacterized protein from Invertebrate iridescent virus 6 (IIV-6).